The sequence spans 498 residues: Myocyte-specific enhancer factor 2D homolog (498 aa).

The tract at residues 1–100 (MGRKKIQIQR…KGFNGCDSPE (100 aa)) is interaction with hdac9. The region spanning 3-57 (RKKIQIQRITDERNRQVTFTKRKFGLMKKAYELSVLCDCEIALIIFNHSNKLFQY) is the MADS-box domain. The segment at residues 58–86 (ASTDMDKVLLKYTEYNEPHESRTNADIIE) is a DNA-binding region (mef2-type). Disordered regions lie at residues 173-215 (LTDP…NSNG), 243-267 (LGKV…NSRK), and 411-498 (SIKR…AWVT). Residues 412 to 424 (IKREPASPNRERS) show a composition bias toward basic and acidic residues. Polar residues-rich tracts occupy residues 425–434 (TGTPLSCFSH) and 447–457 (DSLSSNASSFE).

This sequence belongs to the MEF2 family. As to quaternary structure, binds DNA as a multimer, probably as a dimer. Interacts with hdac9. In terms of tissue distribution, restricted to the somitic mesoderm of early embryos and to the body muscle (myotomes) of the tadpole. Expressed in all tissues examined in the adult.

It is found in the nucleus. Functionally, may regulate muscle-specific transcription in the embryo and may regulate transcription of a variety of cell types in the adult. It binds to the sequence 5'-CTA[TA]4TAR-3'. This chain is Myocyte-specific enhancer factor 2D homolog (mef2d), found in Xenopus laevis (African clawed frog).